Reading from the N-terminus, the 297-residue chain is Homoserine kinase (297 aa).

An ATP-binding site is contributed by 82–92 (PLTRGLGSSAS).

It belongs to the GHMP kinase family. Homoserine kinase subfamily.

It localises to the cytoplasm. It carries out the reaction L-homoserine + ATP = O-phospho-L-homoserine + ADP + H(+). The protein operates within amino-acid biosynthesis; L-threonine biosynthesis; L-threonine from L-aspartate: step 4/5. Its function is as follows. Catalyzes the ATP-dependent phosphorylation of L-homoserine to L-homoserine phosphate. The polypeptide is Homoserine kinase (Bacillus cereus (strain AH187)).